The primary structure comprises 230 residues: GTP cyclohydrolase III (230 aa).

This sequence belongs to the archaeal-type GTP cyclohydrolase family.

The catalysed reaction is GTP + 3 H2O = 2-amino-5-formylamino-6-(5-phospho-D-ribosylamino)pyrimidin-4(3H)-one + 2 phosphate + 2 H(+). Catalyzes the formation of 2-amino-5-formylamino-6-ribofuranosylamino-4(3H)-pyrimidinone ribonucleotide monophosphate and inorganic phosphate from GTP. Also has an independent pyrophosphate phosphohydrolase activity. This is GTP cyclohydrolase III from Saccharolobus islandicus (strain M.14.25 / Kamchatka #1) (Sulfolobus islandicus).